A 478-amino-acid polypeptide reads, in one-letter code: Probable serine carboxypeptidase CPVL (478 aa).

An N-terminal signal peptide occupies residues 1–22; it reads MVRAKWKMVVSLILFMVSPGDG. 2 N-linked (GlcNAc...) asparagine glycosylation sites follow: asparagine 83 and asparagine 134. Serine 206 is an active-site residue. N-linked (GlcNAc...) asparagine glycans are attached at residues asparagine 309 and asparagine 350. Active-site residues include aspartate 390 and histidine 450.

The protein belongs to the peptidase S10 family.

In terms of biological role, may be involved in the digestion of phagocytosed particles in the lysosome, participation in an inflammatory protease cascade, and trimming of peptides for antigen presentation. This is Probable serine carboxypeptidase CPVL (Cpvl) from Mus musculus (Mouse).